A 211-amino-acid chain; its full sequence is Endonuclease V (211 aa).

Mg(2+) is bound by residues aspartate 31 and glutamate 95. Residues 182–211 form a disordered region; sequence IYEVKNTPSPNRSRKKRGNRGKDNNNSQGN.

It belongs to the endonuclease V family. Requires Mg(2+) as cofactor.

It localises to the cytoplasm. It catalyses the reaction Endonucleolytic cleavage at apurinic or apyrimidinic sites to products with a 5'-phosphate.. DNA repair enzyme involved in the repair of deaminated bases. Selectively cleaves double-stranded DNA at the second phosphodiester bond 3' to a deoxyinosine leaving behind the intact lesion on the nicked DNA. The chain is Endonuclease V from Pyrococcus horikoshii (strain ATCC 700860 / DSM 12428 / JCM 9974 / NBRC 100139 / OT-3).